Consider the following 188-residue polypeptide: Elongation factor P (188 aa).

This sequence belongs to the elongation factor P family.

Its subcellular location is the cytoplasm. It participates in protein biosynthesis; polypeptide chain elongation. Functionally, involved in peptide bond synthesis. Stimulates efficient translation and peptide-bond synthesis on native or reconstituted 70S ribosomes in vitro. Probably functions indirectly by altering the affinity of the ribosome for aminoacyl-tRNA, thus increasing their reactivity as acceptors for peptidyl transferase. The chain is Elongation factor P from Rhodopseudomonas palustris (strain HaA2).